The primary structure comprises 163 residues: UPF0523 protein B (163 aa).

This sequence belongs to the UPF0523 family.

The polypeptide is UPF0523 protein B (Dictyostelium discoideum (Social amoeba)).